A 188-amino-acid polypeptide reads, in one-letter code: Ion-translocating oxidoreductase complex subunit G (188 aa).

The Cytoplasmic segment spans residues 1–9 (MSDSKEITK). The helical transmembrane segment at 10-30 (VIVTMVVISAVAAALLALTYT) threads the bilayer. The Extracellular segment spans residues 31-188 (PTQAQLKLLQ…AVDYVSAQEG (158 aa)). At threonine 166 the chain carries FMN phosphoryl threonine.

The protein belongs to the RnfG family. In terms of assembly, the Rnf complex is probably composed of eight subunits, including RnfA, RnfB, RnfC, RnfD, RnfE and RnfG. It depends on FMN as a cofactor.

The protein localises to the cell membrane. Part of a membrane-bound complex that couples electron transfer with translocation of ions across the membrane. Catalyzes Na(+) transport, most probably coupled to electron transfer from reduced ferredoxin to methanophenazine and heterodisulfide reductase. Involved in heterodisulfide reduction during methanogenesis from acetate. In Methanosarcina acetivorans (strain ATCC 35395 / DSM 2834 / JCM 12185 / C2A), this protein is Ion-translocating oxidoreductase complex subunit G.